Reading from the N-terminus, the 257-residue chain is Imidazole glycerol phosphate synthase subunit HisF (257 aa).

Catalysis depends on residues Asp11 and Asp130.

This sequence belongs to the HisA/HisF family. As to quaternary structure, heterodimer of HisH and HisF.

It is found in the cytoplasm. It carries out the reaction 5-[(5-phospho-1-deoxy-D-ribulos-1-ylimino)methylamino]-1-(5-phospho-beta-D-ribosyl)imidazole-4-carboxamide + L-glutamine = D-erythro-1-(imidazol-4-yl)glycerol 3-phosphate + 5-amino-1-(5-phospho-beta-D-ribosyl)imidazole-4-carboxamide + L-glutamate + H(+). It functions in the pathway amino-acid biosynthesis; L-histidine biosynthesis; L-histidine from 5-phospho-alpha-D-ribose 1-diphosphate: step 5/9. IGPS catalyzes the conversion of PRFAR and glutamine to IGP, AICAR and glutamate. The HisF subunit catalyzes the cyclization activity that produces IGP and AICAR from PRFAR using the ammonia provided by the HisH subunit. The protein is Imidazole glycerol phosphate synthase subunit HisF of Shewanella putrefaciens (strain CN-32 / ATCC BAA-453).